The primary structure comprises 458 residues: tRNA(Ile)-lysidine synthase (458 aa).

36 to 41 (SGGADS) contributes to the ATP binding site.

This sequence belongs to the tRNA(Ile)-lysidine synthase family.

The protein resides in the cytoplasm. It catalyses the reaction cytidine(34) in tRNA(Ile2) + L-lysine + ATP = lysidine(34) in tRNA(Ile2) + AMP + diphosphate + H(+). Its function is as follows. Ligates lysine onto the cytidine present at position 34 of the AUA codon-specific tRNA(Ile) that contains the anticodon CAU, in an ATP-dependent manner. Cytidine is converted to lysidine, thus changing the amino acid specificity of the tRNA from methionine to isoleucine. The protein is tRNA(Ile)-lysidine synthase of Protochlamydia amoebophila (strain UWE25).